The chain runs to 261 residues: Ribosomal RNA small subunit methyltransferase A (261 aa).

Asn-15, Ile-17, Gly-42, Glu-64, Asp-90, and Asn-109 together coordinate S-adenosyl-L-methionine.

The protein belongs to the class I-like SAM-binding methyltransferase superfamily. rRNA adenine N(6)-methyltransferase family. RsmA subfamily.

Its subcellular location is the cytoplasm. It catalyses the reaction adenosine(1518)/adenosine(1519) in 16S rRNA + 4 S-adenosyl-L-methionine = N(6)-dimethyladenosine(1518)/N(6)-dimethyladenosine(1519) in 16S rRNA + 4 S-adenosyl-L-homocysteine + 4 H(+). Functionally, specifically dimethylates two adjacent adenosines (A1518 and A1519) in the loop of a conserved hairpin near the 3'-end of 16S rRNA in the 30S particle. May play a critical role in biogenesis of 30S subunits. The chain is Ribosomal RNA small subunit methyltransferase A from Wolbachia sp. subsp. Brugia malayi (strain TRS).